Consider the following 336-residue polypeptide: MAESVFSCIPEDVVFNIFFKLQDDPRNWARLACVCTKFSSIVRNVCCKTQCYSAIPTVISDLLPLPPSAAASASSSTAADSSLTPPGGWASLYKLAVCCPGLFHAGILLENSDFGLERELGPDQNLDPKPTTTDLALNDEEVSKPVGSGLETTSFWSLYDDLYTDTIPAPPPEDSIDDQEEEIETSEIRPGRDLPVRKRRKICRSLGSHLASGGWNLSREQGNKLLASRFRGDCLYICNWPGCIHVEEKRNYMLFRGVFKDFKRSRVWRTINDGNRSKTSGLKCAFCLCDETWDLHSSFCLRRVFGFHDDGEPVVRAYVCENGHVSGAWTALPLYT.

Positions E3–I55 constitute an F-box domain. Residues R197–K201 carry the Nuclear localization signal motif.

In terms of assembly, probable component of an E3 ubiquitin ligase SCF complex. Interacts with SKP1A/ASK1 and SKP1B/ASK2.

It localises to the nucleus. The protein operates within protein modification; protein ubiquitination. Component of SCF(ASK-cullin-F-box) E3 ubiquitin ligase complexes, which may mediate the ubiquitination and subsequent proteasomal degradation of target proteins. Negative regulator of the phyA signaling pathway that shifts the responsiveness of the phyA signaling system associated with hypocotyl elongation from red to far-red wavelength. The protein is Phytochrome A-associated F-box protein (EID1) of Arabidopsis thaliana (Mouse-ear cress).